Consider the following 170-residue polypeptide: Cyclic pyranopterin monophosphate synthase (170 aa).

Residues 1–25 (MADPSTLTHPDPEGGVRMMDASQKS) are disordered. Residues 78 to 80 (LCH) and 116 to 117 (ME) contribute to the substrate site. The active site involves Asp131.

The protein belongs to the MoaC family. As to quaternary structure, homohexamer; trimer of dimers.

It catalyses the reaction (8S)-3',8-cyclo-7,8-dihydroguanosine 5'-triphosphate = cyclic pyranopterin phosphate + diphosphate. The protein operates within cofactor biosynthesis; molybdopterin biosynthesis. Catalyzes the conversion of (8S)-3',8-cyclo-7,8-dihydroguanosine 5'-triphosphate to cyclic pyranopterin monophosphate (cPMP). The protein is Cyclic pyranopterin monophosphate synthase of Salinibacter ruber (strain DSM 13855 / M31).